The following is a 196-amino-acid chain: Imidazoleglycerol-phosphate dehydratase (196 aa).

Belongs to the imidazoleglycerol-phosphate dehydratase family.

The protein resides in the cytoplasm. The catalysed reaction is D-erythro-1-(imidazol-4-yl)glycerol 3-phosphate = 3-(imidazol-4-yl)-2-oxopropyl phosphate + H2O. The protein operates within amino-acid biosynthesis; L-histidine biosynthesis; L-histidine from 5-phospho-alpha-D-ribose 1-diphosphate: step 6/9. This Desulfitobacterium hafniense (strain Y51) protein is Imidazoleglycerol-phosphate dehydratase.